The primary structure comprises 86 residues: MRCVVLFMVSCLLIVLLINHFEEVEAQKWKECNLRDIFPGKCEHDANAKLRCKEDIAKNFRPSRPFECDCQTFDQGRICYCKKCLV.

The signal sequence occupies residues M1–A26. 4 cysteine pairs are disulfide-bonded: C32–C84, C42–C70, C52–C79, and C68–C81.

It belongs to the DEFL family.

The protein resides in the secreted. In terms of biological role, involved in male-mediated self-incompatibility. This Arabidopsis lyrata (Lyre-leaved rock-cress) protein is Defensin-like SRCA-homolog protein (SCR37).